An 82-amino-acid chain; its full sequence is Metallothionein-like protein 2A (82 aa).

This sequence belongs to the metallothionein superfamily. Type 15 family. As to expression, expressed in stems, leaves, rachis, inflorescences and seeds.

Functionally, metallothioneins have a high content of cysteine residues that bind various heavy metals. This Oryza sativa subsp. japonica (Rice) protein is Metallothionein-like protein 2A (MT2A).